The primary structure comprises 335 residues: Peroxidase 53 (335 aa).

The signal sequence occupies residues 1–30 (MAVTNLPTCDGLFIISLIVIVSSIFGTSSA). Position 31 is a pyrrolidone carboxylic acid (Q31). Residues N33 and N43 are each glycosylated (N-linked (GlcNAc...) asparagine). 4 cysteine pairs are disulfide-bonded: C41–C121, C74–C79, C127–C329, and C206–C238. The active-site Proton acceptor is the H72. Ca(2+)-binding residues include D73, V76, G78, D80, and S82. N-linked (GlcNAc...) asparagine glycosylation is present at N165. A substrate-binding site is contributed by P169. N177 carries an N-linked (GlcNAc...) asparagine glycan. H199 is a heme b binding site. T200 contributes to the Ca(2+) binding site. Residues N215, N227, and N241 are each glycosylated (N-linked (GlcNAc...) asparagine). Residues D251, T254, and D259 each contribute to the Ca(2+) site. N297 carries an N-linked (GlcNAc...) asparagine glycan.

The protein belongs to the peroxidase family. Classical plant (class III) peroxidase subfamily. Requires Ca(2+) as cofactor. Heme b is required as a cofactor. Mainly expressed in roots.

It localises to the secreted. The catalysed reaction is 2 a phenolic donor + H2O2 = 2 a phenolic radical donor + 2 H2O. Its function is as follows. Removal of H(2)O(2), oxidation of toxic reductants, biosynthesis and degradation of lignin, suberization, auxin catabolism, response to environmental stresses such as wounding, pathogen attack and oxidative stress. These functions might be dependent on each isozyme/isoform in each plant tissue. Functionally, closely linked to lignin formation by showing monolignol substrate specificity. The sequence is that of Peroxidase 53 (PER53) from Arabidopsis thaliana (Mouse-ear cress).